The chain runs to 207 residues: Large ribosomal subunit protein uL4 (207 aa).

Positions 58 to 78 are disordered; sequence AGGGKKPWRQKGTGRARHGSI. The span at 63–77 shows a compositional bias: basic residues; the sequence is KPWRQKGTGRARHGS.

The protein belongs to the universal ribosomal protein uL4 family. Part of the 50S ribosomal subunit.

One of the primary rRNA binding proteins, this protein initially binds near the 5'-end of the 23S rRNA. It is important during the early stages of 50S assembly. It makes multiple contacts with different domains of the 23S rRNA in the assembled 50S subunit and ribosome. In terms of biological role, forms part of the polypeptide exit tunnel. This Aster yellows witches'-broom phytoplasma (strain AYWB) protein is Large ribosomal subunit protein uL4.